The following is a 529-amino-acid chain: Listeriolysin O (529 aa).

Positions 1–24 are cleaved as a signal peptide; the sequence is MKKIMLVFITLILISLPIAQQTEA. The disordered stretch occupies residues 35–54; it reads SISSMAPPASPPASPKTPIE. Transmembrane regions (beta stranded) follow at residues 214-227, 234-243, 312-321, and 329-341; these read ESQL…AFKA, VNFGAISEGK, STKVKAAFDA, and SGDV…IKNS. Residues 483-493 carry the Conserved undecapeptide motif; sequence ECTGLAWEWWR. The Cholesterol binding signature appears at 515 to 516; that stretch reads TL.

Belongs to the cholesterol-dependent cytolysin family. In terms of assembly, homooligomeric pore complex of 35 to 50 subunits; when inserted in the host membrane.

It localises to the secreted. The protein resides in the host membrane. The protein localises to the host cell membrane. Activity of listeriolysin O is regulated on multiple levels. It should be high in the phagosome, thereby allowing escape of the bacteria from the phagosomal compartment. Then, once inside the host cytosol, the activity must be controlled to prevent lysis of the host plasma membrane and loss of the intracellular environment. Functionally, a cholesterol-dependent toxin that causes cytolysis by forming pores in cholesterol containing host membranes. After binding to target membranes, the protein undergoes a major conformation change, leading to its insertion in the host membrane and formation of an oligomeric pore complex. Cholesterol is required for binding to host membranes, membrane insertion and pore formation; cholesterol binding is mediated by a Thr-Leu pair in the C-terminus. Acts as a major virulence factor required for the escape of bacteria from phagosomal vacuoles and entry into the host cytosol. Can be reversibly inactivated by oxidation. In Listeria monocytogenes serotype 4a (strain HCC23), this protein is Listeriolysin O (hly).